A 179-amino-acid polypeptide reads, in one-letter code: Ribosome maturation factor RimM (179 aa).

The 74-residue stretch at 102–175 (VEMWWDRDLV…RIVVDPPPGL (74 aa)) folds into the PRC barrel domain.

It belongs to the RimM family. Binds ribosomal protein uS19.

It is found in the cytoplasm. Functionally, an accessory protein needed during the final step in the assembly of 30S ribosomal subunit, possibly for assembly of the head region. Essential for efficient processing of 16S rRNA. May be needed both before and after RbfA during the maturation of 16S rRNA. It has affinity for free ribosomal 30S subunits but not for 70S ribosomes. The chain is Ribosome maturation factor RimM from Frankia casuarinae (strain DSM 45818 / CECT 9043 / HFP020203 / CcI3).